Here is a 431-residue protein sequence, read N- to C-terminus: Adenylosuccinate lyase (431 aa).

Residues 4-5 (RY), 67-69 (RHD), and 93-94 (TS) contribute to the N(6)-(1,2-dicarboxyethyl)-AMP site. The Proton donor/acceptor role is filled by histidine 141. Residue glutamine 212 participates in N(6)-(1,2-dicarboxyethyl)-AMP binding. Residue serine 262 is the Proton donor/acceptor of the active site. N(6)-(1,2-dicarboxyethyl)-AMP is bound by residues serine 263, 268–270 (KRN), asparagine 276, and 307–311 (SAERI).

The protein belongs to the lyase 1 family. Adenylosuccinate lyase subfamily. Homodimer and homotetramer. Residues from neighboring subunits contribute catalytic and substrate-binding residues to each active site.

It catalyses the reaction N(6)-(1,2-dicarboxyethyl)-AMP = fumarate + AMP. The enzyme catalyses (2S)-2-[5-amino-1-(5-phospho-beta-D-ribosyl)imidazole-4-carboxamido]succinate = 5-amino-1-(5-phospho-beta-D-ribosyl)imidazole-4-carboxamide + fumarate. It functions in the pathway purine metabolism; AMP biosynthesis via de novo pathway; AMP from IMP: step 2/2. It participates in purine metabolism; IMP biosynthesis via de novo pathway; 5-amino-1-(5-phospho-D-ribosyl)imidazole-4-carboxamide from 5-amino-1-(5-phospho-D-ribosyl)imidazole-4-carboxylate: step 2/2. Functionally, catalyzes two reactions in de novo purine nucleotide biosynthesis. Catalyzes the breakdown of 5-aminoimidazole- (N-succinylocarboxamide) ribotide (SAICAR or 2-[5-amino-1-(5-phospho-beta-D-ribosyl)imidazole-4-carboxamido]succinate) to 5-aminoimidazole-4-carboxamide ribotide (AICAR or 5-amino-1-(5-phospho-beta-D-ribosyl)imidazole-4-carboxamide) and fumarate, and of adenylosuccinate (ADS or N(6)-(1,2-dicarboxyethyl)-AMP) to adenosine monophosphate (AMP) and fumarate. This chain is Adenylosuccinate lyase (purB), found in Staphylococcus aureus (strain USA300).